We begin with the raw amino-acid sequence, 99 residues long: MEYIYAALLLNSANKEVTEEAVKAVLVAGGIEANDARVKALVAALEGVDIAEAIAKAAIAPVAAAAPVAAAAAPAEVKKEEKKEDTTAAAAAGLGALFM.

Part of the 50S ribosomal subunit. Homodimer, it forms part of the ribosomal stalk which helps the ribosome interact with GTP-bound translation factors. Forms both a pentameric uL10/P0(P1)2(P1)2 and heptameric uL10/P0(P1)2(P1)2(P1)2 complex, where uL10/P0 forms an elongated spine to which the P1 dimers bind in a sequential fashion. The proportion of heptameric complexes increases during cell growth.

Its function is as follows. Forms part of the ribosomal stalk, playing a central role in the interaction of the ribosome with GTP-bound translation factors. The protein is Large ribosomal subunit protein P1 of Methanococcus vannielii.